The primary structure comprises 282 residues: Putative peroxisomal biogenesis factor 19 (282 aa).

Residues 73–95 are disordered; sequence QEEAMKKAGADPSEGEGEQPLDP. Cysteine 279 carries the cysteine methyl ester modification. Cysteine 279 carries the S-farnesyl cysteine lipid modification. Positions 280-282 are cleaved as a propeptide — removed in mature form; it reads SIM.

Belongs to the peroxin-19 family.

Its subcellular location is the peroxisome. This Caenorhabditis elegans protein is Putative peroxisomal biogenesis factor 19 (prx-19).